The primary structure comprises 367 residues: Flagellar P-ring protein (367 aa).

The first 22 residues, 1–22 (MRRMLVIRWILAIHLIATQVFA), serve as a signal peptide directing secretion.

It belongs to the FlgI family. In terms of assembly, the basal body constitutes a major portion of the flagellar organelle and consists of four rings (L,P,S, and M) mounted on a central rod.

Its subcellular location is the periplasm. The protein localises to the bacterial flagellum basal body. In terms of biological role, assembles around the rod to form the L-ring and probably protects the motor/basal body from shearing forces during rotation. In Legionella pneumophila subsp. pneumophila (strain Philadelphia 1 / ATCC 33152 / DSM 7513), this protein is Flagellar P-ring protein.